The chain runs to 1705 residues: Homeobox-DDT domain protein RLT1 (1705 aa).

Disordered stretches follow at residues 1–53 (MEMG…QLET), 118–167 (ELPA…EYET), 237–267 (HDPRPRRSHAAARSFHEQQSLDDPSSFTPNM), 296–322 (GPVPRSYVTPGHASRNCSTSQQDMPSP), and 352–414 (GVRK…RKEE). The homeobox DNA-binding region spans 39–98 (VKPKRQMKTPFQLETLEKVYSEEKYPSEATRAELSEKLDLSDRQLQMWFCHRRLKDKKDG). The segment covering 136–159 (GSESGCSPYSNSRRNFASGSSSSR) has biased composition (low complexity). Composition is skewed to polar residues over residues 253–265 (EQQSLDDPSSFTP) and 310–319 (RNCSTSQQDM). The DDT domain maps to 549 to 608 (DETVGNLLMVWRFLISFSDVLDLWPFTLDEFIQAFHDYDSRLLGEIHVTLLRSIIRDVED). The region spanning 731–800 (GTVKFAAFHV…APSTYCVRAP (70 aa)) is the HTH HARE-type domain. Disordered regions lie at residues 1028-1053 (TRERDSFDRDPSQLLDETKPLEDLSN), 1198-1229 (VNHSPTDSVSPSSSAISGSNSDSMETSTSIRV), 1441-1502 (PEDE…KAQS), 1561-1635 (PKSE…FVDY), and 1652-1705 (AIEE…SSDS). The segment covering 1201-1220 (SPTDSVSPSSSAISGSNSDS) has biased composition (low complexity). Positions 1455 to 1465 (SPFKGKGPREQ) are enriched in basic and acidic residues. Composition is skewed to acidic residues over residues 1565–1574 (EVEEDEEEEE), 1611–1628 (VDDESDNSVGVESEDEDG), and 1669–1684 (GEDDAEMSESSEDDDV).

In terms of assembly, interacts with CHR11 and CHR17. Interacts (via the DDT domain) with CHR11 (via C-terminus). As to expression, highly expressed in growing tissues such as inflorescence and flower meristems, young leaves and floral organs. Expressed in roots, rosette and cauline leaves, stems, flowers, inflorescences and siliques.

The protein resides in the nucleus. Transcriptional regulator required for the maintenance of the plant vegetative phase. In association with CHR11 or CHR17 may prevent the early activation of the vegetative-to-reproductive transition by regulating key genes that contribute to flower timing, such as FT, SEP1, SEP3, AGL8/FUL, SOC1 and FLC. This chain is Homeobox-DDT domain protein RLT1, found in Arabidopsis thaliana (Mouse-ear cress).